A 484-amino-acid polypeptide reads, in one-letter code: Aspartyl/glutamyl-tRNA(Asn/Gln) amidotransferase subunit B (484 aa).

It belongs to the GatB/GatE family. GatB subfamily. Heterotrimer of A, B and C subunits.

It catalyses the reaction L-glutamyl-tRNA(Gln) + L-glutamine + ATP + H2O = L-glutaminyl-tRNA(Gln) + L-glutamate + ADP + phosphate + H(+). The catalysed reaction is L-aspartyl-tRNA(Asn) + L-glutamine + ATP + H2O = L-asparaginyl-tRNA(Asn) + L-glutamate + ADP + phosphate + 2 H(+). Its function is as follows. Allows the formation of correctly charged Asn-tRNA(Asn) or Gln-tRNA(Gln) through the transamidation of misacylated Asp-tRNA(Asn) or Glu-tRNA(Gln) in organisms which lack either or both of asparaginyl-tRNA or glutaminyl-tRNA synthetases. The reaction takes place in the presence of glutamine and ATP through an activated phospho-Asp-tRNA(Asn) or phospho-Glu-tRNA(Gln). The protein is Aspartyl/glutamyl-tRNA(Asn/Gln) amidotransferase subunit B of Anaeromyxobacter dehalogenans (strain 2CP-1 / ATCC BAA-258).